The chain runs to 744 residues: Eukaryotic translation initiation factor 3 subunit B (744 aa).

The tract at residues methionine 1–glutamate 20 is disordered. Residues proline 11–glutamate 20 show a composition bias toward acidic residues. The RRM domain occupies threonine 40 to aspartate 126. WD repeat units follow at residues aspartate 193–arginine 232, alanine 234–serine 290, proline 307–lysine 348, and alanine 577–glutamate 622. The segment covering glutamate 699 to lysine 714 has biased composition (basic and acidic residues). The interval glutamate 699–glutamate 722 is disordered.

Belongs to the eIF-3 subunit B family. Component of the eukaryotic translation initiation factor 3 (eIF-3) complex.

The protein localises to the cytoplasm. In terms of biological role, RNA-binding component of the eukaryotic translation initiation factor 3 (eIF-3) complex, which is involved in protein synthesis of a specialized repertoire of mRNAs and, together with other initiation factors, stimulates binding of mRNA and methionyl-tRNAi to the 40S ribosome. The eIF-3 complex specifically targets and initiates translation of a subset of mRNAs involved in cell proliferation. The protein is Eukaryotic translation initiation factor 3 subunit B (prt1) of Sclerotinia sclerotiorum (strain ATCC 18683 / 1980 / Ss-1) (White mold).